The sequence spans 404 residues: Cysteine desulfurase IscS (404 aa).

Residues 75–76, Asn-155, Gln-183, and 203–205 each bind pyridoxal 5'-phosphate; these read AT and SGH. At Lys-206 the chain carries N6-(pyridoxal phosphate)lysine. Pyridoxal 5'-phosphate is bound at residue Thr-243. The active-site Cysteine persulfide intermediate is Cys-328. Cys-328 contacts [2Fe-2S] cluster.

This sequence belongs to the class-V pyridoxal-phosphate-dependent aminotransferase family. NifS/IscS subfamily. Homodimer. Forms a heterotetramer with IscU, interacts with other sulfur acceptors. Pyridoxal 5'-phosphate serves as cofactor.

It is found in the cytoplasm. It carries out the reaction (sulfur carrier)-H + L-cysteine = (sulfur carrier)-SH + L-alanine. It functions in the pathway cofactor biosynthesis; iron-sulfur cluster biosynthesis. Functionally, master enzyme that delivers sulfur to a number of partners involved in Fe-S cluster assembly, tRNA modification or cofactor biosynthesis. Catalyzes the removal of elemental sulfur atoms from cysteine to produce alanine. Functions as a sulfur delivery protein for Fe-S cluster synthesis onto IscU, an Fe-S scaffold assembly protein, as well as other S acceptor proteins. The sequence is that of Cysteine desulfurase IscS from Shewanella pealeana (strain ATCC 700345 / ANG-SQ1).